The sequence spans 144 residues: 3-hydroxyacyl-[acyl-carrier-protein] dehydratase FabZ (144 aa).

H48 is a catalytic residue.

Belongs to the thioester dehydratase family. FabZ subfamily.

The protein localises to the cytoplasm. It catalyses the reaction a (3R)-hydroxyacyl-[ACP] = a (2E)-enoyl-[ACP] + H2O. Involved in unsaturated fatty acids biosynthesis. Catalyzes the dehydration of short chain beta-hydroxyacyl-ACPs and long chain saturated and unsaturated beta-hydroxyacyl-ACPs. In Bacillus cytotoxicus (strain DSM 22905 / CIP 110041 / 391-98 / NVH 391-98), this protein is 3-hydroxyacyl-[acyl-carrier-protein] dehydratase FabZ.